Consider the following 726-residue polypeptide: Eukaryotic translation initiation factor 3 subunit B (726 aa).

Residues Met1–Asp94 are sufficient for interaction with HCR1 and TIF32. Positions Met1–Phe219 are sufficient for interaction with PIC8. The RRM domain maps to Gln37–Asp120. 7 WD repeats span residues Phe142–Val182, Arg186–Arg224, Val235–Thr283, Leu331–Lys374, Glu442–Glu485, Ile505–Asn549, and Asn566–Glu611.

It belongs to the eIF-3 subunit B family. In terms of assembly, component of the eukaryotic translation initiation factor 3 (eIF-3) complex.

It localises to the cytoplasm. RNA-binding component of the eukaryotic translation initiation factor 3 (eIF-3) complex, which is involved in protein synthesis of a specialized repertoire of mRNAs and, together with other initiation factors, stimulates binding of mRNA and methionyl-tRNAi to the 40S ribosome. The eIF-3 complex specifically targets and initiates translation of a subset of mRNAs involved in cell proliferation. The protein is Eukaryotic translation initiation factor 3 subunit B of Vanderwaltozyma polyspora (strain ATCC 22028 / DSM 70294 / BCRC 21397 / CBS 2163 / NBRC 10782 / NRRL Y-8283 / UCD 57-17) (Kluyveromyces polysporus).